The chain runs to 230 residues: Urease accessory protein UreG (230 aa).

33 to 40 (GPVGSGKT) provides a ligand contact to GTP.

It belongs to the SIMIBI class G3E GTPase family. UreG subfamily. As to quaternary structure, homodimer. UreD, UreF and UreG form a complex that acts as a GTP-hydrolysis-dependent molecular chaperone, activating the urease apoprotein by helping to assemble the nickel containing metallocenter of UreC. The UreE protein probably delivers the nickel.

The protein resides in the cytoplasm. Facilitates the functional incorporation of the urease nickel metallocenter. This process requires GTP hydrolysis, probably effectuated by UreG. The polypeptide is Urease accessory protein UreG (Mycobacteroides abscessus (strain ATCC 19977 / DSM 44196 / CCUG 20993 / CIP 104536 / JCM 13569 / NCTC 13031 / TMC 1543 / L948) (Mycobacterium abscessus)).